Consider the following 277-residue polypeptide: Raffinose operon transcriptional regulatory protein RafR (277 aa).

The 99-residue stretch at 176-274 folds into the HTH araC/xylS-type domain; it reads NLAVSYLQEN…GASPSYYRKS (99 aa). 2 DNA-binding regions (H-T-H motif) span residues 193–214 and 241–264; these read MDLC…KTHA and VQSI…KRYS.

Its function is as follows. Involved in the regulation of the raffinose-operon. The chain is Raffinose operon transcriptional regulatory protein RafR (rafR) from Pediococcus pentosaceus.